We begin with the raw amino-acid sequence, 508 residues long: Tyrosine decarboxylase 4 (508 aa).

N6-(pyridoxal phosphate)lysine is present on lysine 318.

It belongs to the group II decarboxylase family. As to quaternary structure, homodimer. Requires pyridoxal 5'-phosphate as cofactor.

The catalysed reaction is L-tyrosine + H(+) = tyramine + CO2. The sequence is that of Tyrosine decarboxylase 4 (TYRDC-4) from Petroselinum crispum (Parsley).